Here is a 430-residue protein sequence, read N- to C-terminus: ETS domain-containing protein Elk-4 (430 aa).

The ETS DNA-binding region spans 5-85; that stretch reads ITLWQFLLQL…NGQKFVYKFV (81 aa). The span at 116-127 shows a compositional bias: basic and acidic residues; it reads SKDVEYGGKERP. Residues 116–138 form a disordered region; the sequence is SKDVEYGGKERPPQPGAKTSSRN. Residue Lys166 forms a Glycyl lysine isopeptide (Lys-Gly) (interchain with G-Cter in SUMO2) linkage. Disordered stretches follow at residues 245–279 and 292–325; these read TTFN…DIDT and PENL…KGLE. The segment covering 249–272 has biased composition (pro residues); sequence PTPPVPSTPLPLKEPPRTPSPPLS. Over residues 299 to 312 the composition is skewed to basic and acidic residues; that stretch reads PKNEDSALPEKDKT.

It belongs to the ETS family. As to quaternary structure, interacts with SIRT7. As to expression, lung and liver.

The protein localises to the nucleus. Involved in both transcriptional activation and repression. Interaction with SIRT7 leads to recruitment and stabilization of SIRT7 at promoters, followed by deacetylation of histone H3 at 'Lys-18' (H3K18Ac) and subsequent transcription repression. Forms a ternary complex with the serum response factor (SRF). Requires DNA-bound SRF for ternary complex formation and makes extensive DNA contacts to the 5'side of SRF, but does not bind DNA autonomously. In Mus musculus (Mouse), this protein is ETS domain-containing protein Elk-4 (Elk4).